The primary structure comprises 278 residues: Antiviral protein MAP (278 aa).

The N-terminal stretch at Met-1–Ala-28 is a signal peptide. A disulfide bond links Cys-64 and Cys-248. The active site involves Glu-196.

It catalyses the reaction Endohydrolysis of the N-glycosidic bond at one specific adenosine on the 28S rRNA.. Functionally, inhibits viral infection of plants, and protein synthesis in vitro. This chain is Antiviral protein MAP, found in Mirabilis jalapa (Garden four-o'clock).